We begin with the raw amino-acid sequence, 397 residues long: Enoyl-[acyl-carrier-protein] reductase [NADH] (397 aa).

NAD(+) contacts are provided by residues 48–53 (GASTGY), 74–75 (FE), 111–112 (DA), and 139–140 (VA). Tyr-225 contacts substrate. Tyr-235 functions as the Proton donor in the catalytic mechanism. NAD(+) contacts are provided by residues Lys-244 and 273–275 (VVT).

The protein belongs to the TER reductase family. As to quaternary structure, monomer.

It carries out the reaction a 2,3-saturated acyl-[ACP] + NAD(+) = a (2E)-enoyl-[ACP] + NADH + H(+). It participates in lipid metabolism; fatty acid biosynthesis. In terms of biological role, involved in the final reduction of the elongation cycle of fatty acid synthesis (FAS II). Catalyzes the reduction of a carbon-carbon double bond in an enoyl moiety that is covalently linked to an acyl carrier protein (ACP). This chain is Enoyl-[acyl-carrier-protein] reductase [NADH], found in Burkholderia pseudomallei (strain 1106a).